Consider the following 737-residue polypeptide: Phosphoribosylformylglycinamidine synthase subunit PurL (737 aa).

His-50 is a catalytic residue. ATP is bound by residues Tyr-53 and Lys-92. Glu-94 serves as a coordination point for Mg(2+). Residues 95-98 and Arg-117 contribute to the substrate site; that span reads SHNH. Residue His-96 is the Proton acceptor of the active site. Mg(2+) is bound at residue Asp-118. Gln-241 contributes to the substrate binding site. A Mg(2+)-binding site is contributed by Asp-269. 313–315 contacts substrate; that stretch reads ESQ. ATP-binding residues include Asp-495 and Gly-532. Asn-533 lines the Mg(2+) pocket. A substrate-binding site is contributed by Ser-535.

Belongs to the FGAMS family. As to quaternary structure, monomer. Part of the FGAM synthase complex composed of 1 PurL, 1 PurQ and 2 PurS subunits.

It is found in the cytoplasm. It catalyses the reaction N(2)-formyl-N(1)-(5-phospho-beta-D-ribosyl)glycinamide + L-glutamine + ATP + H2O = 2-formamido-N(1)-(5-O-phospho-beta-D-ribosyl)acetamidine + L-glutamate + ADP + phosphate + H(+). Its pathway is purine metabolism; IMP biosynthesis via de novo pathway; 5-amino-1-(5-phospho-D-ribosyl)imidazole from N(2)-formyl-N(1)-(5-phospho-D-ribosyl)glycinamide: step 1/2. In terms of biological role, part of the phosphoribosylformylglycinamidine synthase complex involved in the purines biosynthetic pathway. Catalyzes the ATP-dependent conversion of formylglycinamide ribonucleotide (FGAR) and glutamine to yield formylglycinamidine ribonucleotide (FGAM) and glutamate. The FGAM synthase complex is composed of three subunits. PurQ produces an ammonia molecule by converting glutamine to glutamate. PurL transfers the ammonia molecule to FGAR to form FGAM in an ATP-dependent manner. PurS interacts with PurQ and PurL and is thought to assist in the transfer of the ammonia molecule from PurQ to PurL. This is Phosphoribosylformylglycinamidine synthase subunit PurL from Bartonella bacilliformis (strain ATCC 35685 / KC583 / Herrer 020/F12,63).